The primary structure comprises 372 residues: MADS-box transcription factor pvg4 (372 aa).

One can recognise an MADS-box domain in the interval 1–61; it reads MGRKKISIAP…GRLHVFCSSD (61 aa). A disordered region spans residues 81–187; that stretch reads SHFSSSPVEE…HPPHPHFHNN (107 aa). A compositionally biased stretch (low complexity) spans 84–100; that stretch reads SSSPVEESSTVSPETTT. Residues 114–145 show a composition bias toward polar residues; it reads QDQPLSDSQLDTGDSPATSETTVQDYNPQVQS. Residues 167–184 show a composition bias toward basic residues; sequence QHHHPHTRPPHHPPHPHF.

Its subcellular location is the nucleus. In terms of biological role, acts in transcription regulation. May bind to a MEF2-like typee II promoter sequence. This chain is MADS-box transcription factor pvg4 (pvg4), found in Schizosaccharomyces pombe (strain 972 / ATCC 24843) (Fission yeast).